The sequence spans 181 residues: dTTP/UTP pyrophosphatase (181 aa).

The active-site Proton acceptor is D67.

It belongs to the Maf family. YhdE subfamily. It depends on a divalent metal cation as a cofactor.

It is found in the cytoplasm. The catalysed reaction is dTTP + H2O = dTMP + diphosphate + H(+). It catalyses the reaction UTP + H2O = UMP + diphosphate + H(+). In terms of biological role, nucleoside triphosphate pyrophosphatase that hydrolyzes dTTP and UTP. May have a dual role in cell division arrest and in preventing the incorporation of modified nucleotides into cellular nucleic acids. The chain is dTTP/UTP pyrophosphatase from Latilactobacillus sakei subsp. sakei (strain 23K) (Lactobacillus sakei subsp. sakei).